The following is a 116-amino-acid chain: Vesicle-associated membrane protein 2 (116 aa).

The interval 1 to 28 (MSATAATVPPAAPAGEGGPPAPPPNLTS) is disordered. Serine 2 is modified (N-acetylserine). Residues 2-94 (SATAATVPPA…KRKYWWKNLK (93 aa)) lie on the Cytoplasmic side of the membrane. Residues 31–91 (RLQQTQAQVD…AKLKRKYWWK (61 aa)) form the v-SNARE coiled-coil homology domain. The tract at residues 92 to 116 (NLKMMIILGVICAIILIIIIVYFST) is required for interaction with SEPT8. Residues 95 to 114 (MMIILGVICAIILIIIIVYF) form a helical; Anchor for type IV membrane protein membrane-spanning segment. At 115–116 (ST) the chain is on the vesicular side.

Belongs to the synaptobrevin family. As to quaternary structure, part of the SNARE core complex containing SNAP25, VAMP2 and STX1A; this complex constitutes the basic catalytic machinery of the complex neurotransmitter release apparatus. Recruited to the SNARE complex following binding of the SNARE complex component STX1A to STXBP1. This complex binds to CPLX1. Interacts with VAPA and VAPB. Interacts (via N-terminus) with KCNB1 (via N-terminus and C-terminus); stimulates the channel inactivation rate of KCNB1. Interacts with POPDC1 and STX4. Interacts with WDFY2, PRKCZ and PRKCI. Forms a complex with WDFY2 and PRKCZ. Interacts with SEPT8; the interaction inhibits interaction of VAMP2 with SYP. Interacts with SYP; the interaction is inhibited by interaction with SEPT8. Interacts with PICALM. Interacts with alpha-synuclein/SNCA. Interacts with STX3 isoform 3B. In terms of processing, phosphorylated by PRKCZ in vitro and this phosphorylation is increased in the presence of WDFY2. (Microbial infection) Targeted and hydrolyzed by C.botulinum neurotoxin type B (BoNT/B, botB); 20 hours after treatment of spinal cord cells almost all the protein has been digested. BoNT/B hydrolyzes the 76-Gln-|-Phe-77 bond and inhibits neurotransmitter release. Post-translationally, (Microbial infection) Targeted and hydrolyzed by C.tetani toxin (tetX); 20 hours after treatment of spinal cord cells almost all the protein has been digested. Tetanus toxin hydrolyzes the 76-Gln-|-Phe-77 bond and inhibits neurotransmitter release. In terms of tissue distribution, expressed in the outer plexiform layer of the retina (at protein level).

It localises to the cytoplasmic vesicle. It is found in the secretory vesicle. Its subcellular location is the synaptic vesicle membrane. The protein resides in the cell membrane. Its function is as follows. Involved in the targeting and/or fusion of transport vesicles to their target membrane. Major SNARE protein of synaptic vesicles which mediates fusion of synaptic vesicles to release neurotransmitters. Essential for fast vesicular exocytosis and activity-dependent neurotransmitter release as well as fast endocytosis that mediates rapid reuse of synaptic vesicles. Modulates the gating characteristics of the delayed rectifier voltage-dependent potassium channel KCNB1. In Mus musculus (Mouse), this protein is Vesicle-associated membrane protein 2 (Vamp2).